Reading from the N-terminus, the 885-residue chain is Translation initiation factor IF-2 (885 aa).

Disordered stretches follow at residues 135-159 (KAKA…AAAE) and 184-289 (QAEA…PESM). Residues 184 to 232 (QAEATKRKQDEEAAKAAEKARLLAEENSKRWAEEERQRLEAERYSDHHI) are compositionally biased toward basic and acidic residues. Residues 253-266 (GRRARNKNTAKSKR) show a composition bias toward basic residues. Residues 267 to 276 (GGKDARDGRE) are compositionally biased toward basic and acidic residues. A tr-type G domain is found at 385 to 554 (PRAPVVTIMG…LLQAEVLELK (170 aa)). The G1 stretch occupies residues 394–401 (GHVDHGKT). 394-401 (GHVDHGKT) provides a ligand contact to GTP. The segment at 419–423 (GITQH) is G2. The tract at residues 440 to 443 (DTPG) is G3. GTP contacts are provided by residues 440–444 (DTPGH) and 494–497 (NKMD). The segment at 494–497 (NKMD) is G4. Residues 530–532 (SAK) are G5.

The protein belongs to the TRAFAC class translation factor GTPase superfamily. Classic translation factor GTPase family. IF-2 subfamily.

The protein localises to the cytoplasm. One of the essential components for the initiation of protein synthesis. Protects formylmethionyl-tRNA from spontaneous hydrolysis and promotes its binding to the 30S ribosomal subunits. Also involved in the hydrolysis of GTP during the formation of the 70S ribosomal complex. This chain is Translation initiation factor IF-2, found in Shewanella sp. (strain MR-7).